Consider the following 405-residue polypeptide: Endo-1,4-beta-xylanase 5 (405 aa).

Residues 1-22 (MTRLATLITLAGLLAVSPGAYA) form the signal peptide. 2 N-linked (GlcNAc...) asparagine glycosylation sites follow: N27 and N69. The GH10 domain maps to 32-352 (STGAEGLNSL…KPAYTSVSSL (321 aa)). The active-site Proton donor is E166. N171 carries an N-linked (GlcNAc...) asparagine glycan. E273 (nucleophile) is an active-site residue. A disulfide bridge connects residues C302 and C308. G380 is lipidated: GPI-anchor amidated glycine. Positions 381–405 (AGRETVSIAGLTLALSSLAFGMFML) are cleaved as a propeptide — removed in mature form.

Belongs to the glycosyl hydrolase 10 (cellulase F) family.

The protein resides in the cell membrane. Its subcellular location is the secreted. It catalyses the reaction Endohydrolysis of (1-&gt;4)-beta-D-xylosidic linkages in xylans.. It functions in the pathway glycan degradation; xylan degradation. Functionally, endo-1,4-beta-xylanase involved in the hydrolysis of xylan, a major structural heterogeneous polysaccharide found in plant biomass representing the second most abundant polysaccharide in the biosphere, after cellulose. This chain is Endo-1,4-beta-xylanase 5 (XYL5), found in Pyricularia grisea (Crabgrass-specific blast fungus).